We begin with the raw amino-acid sequence, 193 residues long: Cysteine and glycine-rich protein 1 (193 aa).

An LIM zinc-binding 1 domain is found at Cys-10–Cys-61. Residues Lys-64–Lys-69 carry the Nuclear localization signal motif. Residue Ser-81 is modified to Phosphoserine. At Lys-84 the chain carries N6-acetyllysine. Lys-91 participates in a covalent cross-link: Glycyl lysine isopeptide (Lys-Gly) (interchain with G-Cter in SUMO2). An N6-acetyllysine mark is found at Lys-112, Lys-131, Lys-137, and Lys-161. The LIM zinc-binding 2 domain occupies Cys-119–Cys-170. The residue at position 192 (Ser-192) is a Phosphoserine.

Interacts with ASCC1; ASCC2 and TRIP4.

It localises to the nucleus. Its function is as follows. Could play a role in neuronal development. The chain is Cysteine and glycine-rich protein 1 (CSRP1) from Pongo abelii (Sumatran orangutan).